A 698-amino-acid polypeptide reads, in one-letter code: 4-hydroxybutyrate--CoA ligase [ADP-forming] (698 aa).

In terms of domain architecture, ATP-grasp spans 491–544 (QEVLKAYGLPLPKSTLAKNEAEAVKAAKKIGYPVVMKIASPQIIHKSDAGGVKV). 517–544 (AKKIGYPVVMKIASPQIIHKSDAGGVKV) provides a ligand contact to ATP.

In the N-terminal section; belongs to the acetate CoA ligase alpha subunit family. This sequence in the C-terminal section; belongs to the acetate CoA ligase beta subunit family. The cofactor is Mg(2+). It depends on Mn(2+) as a cofactor.

The enzyme catalyses 4-hydroxybutanoate + ATP + CoA = 4-hydroxybutanoyl-CoA + ADP + phosphate. Its function is as follows. Involved in thaumarchaeal hydroxypropionate/hydroxybutyrate (HP/HB) cycle, a modified version of the autotrophic HP/HB cycle of Crenarchaeota. Catalyzes the formation of 4-hydroxybutyryl-CoA, ADP and phosphate from 4-hydroxybutyrate, coenzyme A (CoA) and ATP. Can also use acetate, propionate and butyrate, with poor catalytic efficiency. This chain is 4-hydroxybutyrate--CoA ligase [ADP-forming], found in Nitrosopumilus maritimus (strain SCM1).